The chain runs to 137 residues: Nucleoside diphosphate kinase (137 aa).

Residues lysine 9, phenylalanine 57, arginine 85, threonine 91, arginine 102, and asparagine 112 each coordinate ATP. Catalysis depends on histidine 115, which acts as the Pros-phosphohistidine intermediate.

The protein belongs to the NDK family. Homotetramer. Requires Mg(2+) as cofactor.

Its subcellular location is the cytoplasm. The enzyme catalyses a 2'-deoxyribonucleoside 5'-diphosphate + ATP = a 2'-deoxyribonucleoside 5'-triphosphate + ADP. It carries out the reaction a ribonucleoside 5'-diphosphate + ATP = a ribonucleoside 5'-triphosphate + ADP. Its function is as follows. Major role in the synthesis of nucleoside triphosphates other than ATP. The ATP gamma phosphate is transferred to the NDP beta phosphate via a ping-pong mechanism, using a phosphorylated active-site intermediate. The chain is Nucleoside diphosphate kinase from Geotalea daltonii (strain DSM 22248 / JCM 15807 / FRC-32) (Geobacter daltonii).